We begin with the raw amino-acid sequence, 90 residues long: Small ribosomal subunit protein bS20 (90 aa).

The tract at residues 1–25 (MANSPSAKKRAKQAEKRRSHNASLR) is disordered. Positions 7–20 (AKKRAKQAEKRRSH) are enriched in basic residues.

Belongs to the bacterial ribosomal protein bS20 family.

Binds directly to 16S ribosomal RNA. This chain is Small ribosomal subunit protein bS20, found in Pseudomonas fluorescens (strain Pf0-1).